A 236-amino-acid polypeptide reads, in one-letter code: Concanavalin-Ma (236 aa).

Mn(2+)-binding residues include Glu8 and Asp10. Asp10, Tyr12, Asn14, and Asp19 together coordinate Ca(2+). Tyr12 contacts a carbohydrate. Mn(2+) is bound by residues Asp19 and His24. 98–99 provides a ligand contact to a carbohydrate; that stretch reads LY. Asp207 is a Ca(2+) binding site. Arg227 provides a ligand contact to a carbohydrate.

The protein belongs to the leguminous lectin family. Homotetramer.

In terms of biological role, glucose/D-mannose specific lectin. The chain is Concanavalin-Ma from Canavalia rosea (Beach bean).